A 511-amino-acid polypeptide reads, in one-letter code: Phosphoenolpyruvate carboxylase (511 aa).

The protein belongs to the PEPCase type 2 family. In terms of assembly, homotetramer. It depends on Mg(2+) as a cofactor.

It catalyses the reaction oxaloacetate + phosphate = phosphoenolpyruvate + hydrogencarbonate. Functionally, catalyzes the irreversible beta-carboxylation of phosphoenolpyruvate (PEP) to form oxaloacetate (OAA), a four-carbon dicarboxylic acid source for the tricarboxylic acid cycle. This is Phosphoenolpyruvate carboxylase from Saccharolobus islandicus (strain Y.G.57.14 / Yellowstone #1) (Sulfolobus islandicus).